The primary structure comprises 491 residues: 4,4'-diapolycopen-4-al dehydrogenase (491 aa).

The active site involves E208.

Belongs to the carotenoid/retinoid oxidoreductase family. CrtN subfamily.

It catalyses the reaction all-trans-4,4'-diapolycopen-4-al + A + H2O = all-trans-4,4'-diapolycopen-4-oate + AH2 + H(+). The protein operates within carotenoid biosynthesis. Involved in the biosynthesis of the major C30 carotenoid methyl 4'-[6-O-(acylglycosyl)oxy]-4,4'-diapolycopen-4-oic acid via 4,4'-diapolycopen-4-oic acid intermediate. Catalyzes the oxidation of 4,4'-diapolycopen-4-al to yield 4,4'-diapolycopen-4-oic acid. This is 4,4'-diapolycopen-4-al dehydrogenase from Metabacillus indicus (Bacillus indicus).